The sequence spans 358 residues: tRNA-specific 2-thiouridylase MnmA (358 aa).

ATP is bound by residues 7–14 (AMSGGVDS) and M33. The active-site Nucleophile is C102. The cysteines at positions 102 and 199 are disulfide-linked. Residue G126 coordinates ATP. The interval 149 to 151 (KDQ) is interaction with tRNA. The Cysteine persulfide intermediate role is filled by C199. Residues 305 to 306 (RY) are interaction with tRNA.

Belongs to the MnmA/TRMU family.

Its subcellular location is the cytoplasm. It catalyses the reaction S-sulfanyl-L-cysteinyl-[protein] + uridine(34) in tRNA + AH2 + ATP = 2-thiouridine(34) in tRNA + L-cysteinyl-[protein] + A + AMP + diphosphate + H(+). Its function is as follows. Catalyzes the 2-thiolation of uridine at the wobble position (U34) of tRNA, leading to the formation of s(2)U34. In Halothermothrix orenii (strain H 168 / OCM 544 / DSM 9562), this protein is tRNA-specific 2-thiouridylase MnmA.